Reading from the N-terminus, the 312-residue chain is Bifunctional pinoresinol-lariciresinol reductase (312 aa).

NADP(+) is bound by residues 10–16, arginine 35, and lysine 44; that span reads GGTGYLG. The active-site Proton acceptor is the lysine 139. Residue arginine 143 coordinates NADP(+). Histidine 271 lines the substrate pocket.

Belongs to the NmrA-type oxidoreductase family. Isoflavone reductase subfamily. In terms of assembly, dimer. As to expression, expressed in young stems, young roots and petioles. In stems, expressed in radial parenchyma cells and in the cambial cells of developing secondary xylem.

It catalyses the reaction (+)-lariciresinol + NADP(+) = (+)-pinoresinol + NADPH + H(+). The catalysed reaction is (-)-secoisolariciresinol + NADP(+) = (+)-lariciresinol + NADPH + H(+). In terms of biological role, reductase involved in lignan biosynthesis. Catalyzes the enantioselective sequential conversion of (+)-pinoresinol into (+)-lariciresinol and of (+)-lariciresinol into (-)-secoisolariciresinol. Abstracts the 4R-hydride from the NADPH cofactor during catalysis. In Forsythia intermedia (Border forsythia), this protein is Bifunctional pinoresinol-lariciresinol reductase (PLR_Fi1).